A 159-amino-acid chain; its full sequence is Histone H2A (159 aa).

The span at 1–10 (MDSTGTGAGG) shows a compositional bias: gly residues. 2 disordered regions span residues 1–31 (MDST…SVSR) and 133–159 (KTAE…PKKA). Composition is skewed to basic residues over residues 11-29 (KGKK…KKSV) and 149-159 (PKKAAKSPKKA). Short sequence motifs (SPKK motif) lie at residues 148–151 (SPKK) and 155–158 (SPKK).

Belongs to the histone H2A family. In terms of assembly, the nucleosome is a histone octamer containing two molecules each of H2A, H2B, H3 and H4 assembled in one H3-H4 heterotetramer and two H2A-H2B heterodimers. The octamer wraps approximately 147 bp of DNA.

Its subcellular location is the nucleus. The protein localises to the chromosome. Its function is as follows. Core component of nucleosome. Nucleosomes wrap and compact DNA into chromatin, limiting DNA accessibility to the cellular machineries which require DNA as a template. Histones thereby play a central role in transcription regulation, DNA repair, DNA replication and chromosomal stability. DNA accessibility is regulated via a complex set of post-translational modifications of histones, also called histone code, and nucleosome remodeling. The chain is Histone H2A from Zea mays (Maize).